The following is a 99-amino-acid chain: Malonate decarboxylase acyl carrier protein (99 aa).

Residue Ser25 is modified to O-(phosphoribosyl dephospho-coenzyme A)serine.

The protein belongs to the MdcC family. Post-translationally, covalently binds the prosthetic group of malonate decarboxylase.

Its subcellular location is the cytoplasm. Functionally, subunit of malonate decarboxylase, it is an acyl carrier protein to which acetyl and malonyl thioester residues are bound via a 2'-(5''-phosphoribosyl)-3'-dephospho-CoA prosthetic group and turn over during the catalytic mechanism. The protein is Malonate decarboxylase acyl carrier protein of Pseudomonas syringae pv. tomato (strain ATCC BAA-871 / DC3000).